A 581-amino-acid polypeptide reads, in one-letter code: Chaotic nuclear migration protein 67 (581 aa).

5 positions are modified to phosphoserine: Ser-17, Ser-20, Ser-72, Ser-85, and Ser-89. The interval 86–150 (YQESPGLQER…PTDEHTSPDI (65 aa)) is disordered. Basic and acidic residues predominate over residues 94–114 (ERPKNEKDKSPIGTDVHKKDV). Residue Ser-151 is modified to Phosphoserine. 3 coiled-coil regions span residues 179–252 (LGYQ…DTIQ), 306–363 (FLCA…LSKQ), and 373–451 (KLTI…NTSE).

As to quaternary structure, interacts directly with ADY3 and YOR129C. Interacts with ADY4. Probable component of a SPB complex composed of ADY3, SSP1, DON1, MPC54, SPO21/MPC70, NUD1 and CNM67. In terms of processing, phosphorylated in its N-terminal part.

Its subcellular location is the cytoplasm. It localises to the cytoskeleton. It is found in the microtubule organizing center. The protein resides in the spindle pole body. Involved in the pathway that organizes the shaping and sizing of the prospore membrane (PSM) during sporulation. Required for the proper formation of the spindle pole body (SPB) outer plaque. May connect the outer plaque to the central plaque embedded in the nuclear envelope. In Saccharomyces cerevisiae (strain ATCC 204508 / S288c) (Baker's yeast), this protein is Chaotic nuclear migration protein 67 (CNM67).